Reading from the N-terminus, the 361-residue chain is Chorismate synthase (361 aa).

NADP(+) is bound by residues Arg48 and Arg54. FMN is bound by residues 125-127 (RSS), 238-239 (NA), Gly278, 293-297 (KPTSS), and Arg319.

It belongs to the chorismate synthase family. In terms of assembly, homotetramer. Requires FMNH2 as cofactor.

It catalyses the reaction 5-O-(1-carboxyvinyl)-3-phosphoshikimate = chorismate + phosphate. It functions in the pathway metabolic intermediate biosynthesis; chorismate biosynthesis; chorismate from D-erythrose 4-phosphate and phosphoenolpyruvate: step 7/7. Functionally, catalyzes the anti-1,4-elimination of the C-3 phosphate and the C-6 proR hydrogen from 5-enolpyruvylshikimate-3-phosphate (EPSP) to yield chorismate, which is the branch point compound that serves as the starting substrate for the three terminal pathways of aromatic amino acid biosynthesis. This reaction introduces a second double bond into the aromatic ring system. The chain is Chorismate synthase from Citrobacter koseri (strain ATCC BAA-895 / CDC 4225-83 / SGSC4696).